Consider the following 312-residue polypeptide: MKTLPKFKPFVQTCSDCGETQNIVEDYKNGYHVCGRCGCIVGNRIIDEGSEWRSFGDSNKVDPCRIGSASNPYLESEQLDTMISTGGGMNSYVLSKIQMKNSMRGPERALKHGMNLITAFCERSNLSRTIIDRAHYIFKNIEERKLLKGKNVEGIVAACIYIACRQEECPRTFKEISVMTAVQKREIGRCFKLISPHLERMATMSTENIIARFCSDLNLNIKIQKIATEIAKAAHELGCLAGKSPDSIAAAVIYMVTNLFPEEKKIQKDIQFVTNVTEVTIKNTYKELLTFKYDIIPENMVNKESIDKLPGY.

The segment at 10–42 adopts a TFIIB-type zinc-finger fold; the sequence is FVQTCSDCGETQNIVEDYKNGYHVCGRCGCIVG. 4 residues coordinate Zn(2+): Cys-14, Cys-17, Cys-34, and Cys-37. Repeat copies occupy residues 120–196 and 213–290.

This sequence belongs to the TFIIB family. In terms of assembly, associates with TFIID-IIA (DA complex) to form TFIID-IIA-IIB (DAB-complex) which is then recognized by polymerase II.

Its subcellular location is the nucleus. In terms of biological role, general factor that plays a major role in the activation of eukaryotic genes transcribed by RNA polymerase II. This Encephalitozoon cuniculi (strain GB-M1) (Microsporidian parasite) protein is Transcription initiation factor IIB.